The following is a 111-amino-acid chain: Large ribosomal subunit protein uL24 (111 aa).

Belongs to the universal ribosomal protein uL24 family. In terms of assembly, part of the 50S ribosomal subunit.

One of two assembly initiator proteins, it binds directly to the 5'-end of the 23S rRNA, where it nucleates assembly of the 50S subunit. In terms of biological role, one of the proteins that surrounds the polypeptide exit tunnel on the outside of the subunit. The sequence is that of Large ribosomal subunit protein uL24 from Chlamydia muridarum (strain MoPn / Nigg).